The primary structure comprises 348 residues: sn-glycerol-3-phosphate import ATP-binding protein UgpC 3 (348 aa).

Residues 4 to 234 (INIIDVKKNY…PASLFVASFI (231 aa)) enclose the ABC transporter domain. Residue 36–43 (GPSGCGKS) coordinates ATP.

Belongs to the ABC transporter superfamily. sn-glycerol-3-phosphate importer (TC 3.A.1.1.3) family. In terms of assembly, the complex is composed of two ATP-binding proteins (UgpC), two transmembrane proteins (UgpA and UgpE) and a solute-binding protein (UgpB).

The protein resides in the cell inner membrane. It carries out the reaction sn-glycerol 3-phosphate(out) + ATP + H2O = sn-glycerol 3-phosphate(in) + ADP + phosphate + H(+). Its function is as follows. Part of the ABC transporter complex UgpBAEC involved in sn-glycerol-3-phosphate (G3P) import. Responsible for energy coupling to the transport system. The polypeptide is sn-glycerol-3-phosphate import ATP-binding protein UgpC 3 (Rhizobium johnstonii (strain DSM 114642 / LMG 32736 / 3841) (Rhizobium leguminosarum bv. viciae)).